We begin with the raw amino-acid sequence, 423 residues long: Salicylate 5-hydroxylase, large oxygenase component (423 aa).

The tract at residues 1–20 (MSEPQRLKPVFPQDPKWPGE) is disordered. The Rieske domain maps to 49–168 (WCYVGLEAEI…VAARGGAVFA (120 aa)). C91, H93, C111, and H114 together coordinate [2Fe-2S] cluster. Fe cation contacts are provided by H224, H229, and D370.

The protein belongs to the bacterial ring-hydroxylating dioxygenase alpha subunit family. In terms of assembly, the salicylate 5-hydroxylase (S5H) multicomponent enzyme system is composed of an electron transfer component and an oxygenase component. The electron transfer component is comprised of a ferredoxin reductase (NagAa) and a ferredoxin (NagAb), and the oxygenase component is formed by a large subunit (NagG) and a small subunit (NagH). Fe cation is required as a cofactor. [2Fe-2S] cluster serves as cofactor.

It catalyses the reaction salicylate + NADH + O2 + H(+) = 2,5-dihydroxybenzoate + NAD(+) + H2O. The protein operates within aromatic compound metabolism; naphthalene degradation. Its function is as follows. Oxygenase component of the salicylate 5-hydroxylase (S5H) multicomponent enzyme system which catalyzes the 5-hydroxylation of salicylate to gentisate. Active only on substrates with a ring-substituted carboxylate group with an adjacent hydroxyl group. Primarily active against salicylate and substituted salicylates, but not against 2-hydroxycinnamate, 3-hydroxycinnamate, 2-hydroxyphenylacetate, 3-hydroxyphenylacetate, 2-hydroxybenzophenone, 1-hydroxy-2-naphthoate, 4-methoxysalicylate or 2-hydroxyacetophenone. The chain is Salicylate 5-hydroxylase, large oxygenase component from Ralstonia sp.